We begin with the raw amino-acid sequence, 122 residues long: UPF0102 protein CA_C1763 (122 aa).

The protein belongs to the UPF0102 family.

The protein is UPF0102 protein CA_C1763 of Clostridium acetobutylicum (strain ATCC 824 / DSM 792 / JCM 1419 / IAM 19013 / LMG 5710 / NBRC 13948 / NRRL B-527 / VKM B-1787 / 2291 / W).